The sequence spans 926 residues: LPS-assembly protein LptD (926 aa).

The N-terminal stretch at 1-22 is a signal peptide; sequence MALKSPAFRKKFPLLVTGSLLA. The interval 55-91 is disordered; it reads AAAVDLPPRPVHDTTSVSSNGTVTSQGTSSGEQSAGT. Residues 68-91 show a composition bias toward low complexity; sequence TTSVSSNGTVTSQGTSSGEQSAGT.

The protein belongs to the LptD family. As to quaternary structure, component of the lipopolysaccharide transport and assembly complex. Interacts with LptE and LptA.

Its subcellular location is the cell outer membrane. Together with LptE, is involved in the assembly of lipopolysaccharide (LPS) at the surface of the outer membrane. This is LPS-assembly protein LptD from Pseudomonas syringae pv. syringae (strain B728a).